We begin with the raw amino-acid sequence, 346 residues long: MICVGIESTAEKLGVGVVTDDGEILVNVKAQYIPPPGSGILPREAAEHHSRELPELLERALKNAGVEPEDIDLVAYSQGPGLGPCLRVGATAARTLALTLEVPLAPVNHCVAHVEIGKLAARQDGFDFDEPVTLYVSGGNTQVLALKAGRYRVFGETLDLPVGNMLDTFARKVGLPHPGGPEIERLAEEGEPVELPYTVRGTDVSFSGLLTAALRRYEQGDRLEDVCAGLQETAFAMLVEITERAAAQLGRDEILLTGGVAANRRLSEMMHEMAEDRGAEAYTVPPELAGDNGAMIAWTGILVHEHGLSIPPDEIPEKAIVKQRYRVDEAPVPWAARPSRSADSQG.

Residues His109, His113, and Tyr135 each contribute to the Fe cation site. Substrate is bound by residues 135–139 (YVSGG), Asp167, Gly180, Glu184, and Asn263. Fe cation is bound at residue Asp291.

It belongs to the KAE1 / TsaD family. As to quaternary structure, monomer. Component of the KEOPS complex that consists of Kae1, Bud32, Cgi121 and Pcc1; the whole complex dimerizes. It depends on Fe(2+) as a cofactor.

It localises to the cytoplasm. It carries out the reaction L-threonylcarbamoyladenylate + adenosine(37) in tRNA = N(6)-L-threonylcarbamoyladenosine(37) in tRNA + AMP + H(+). In terms of biological role, required for the formation of a threonylcarbamoyl group on adenosine at position 37 (t(6)A37) in tRNAs that read codons beginning with adenine. Is a component of the KEOPS complex that is probably involved in the transfer of the threonylcarbamoyl moiety of threonylcarbamoyl-AMP (TC-AMP) to the N6 group of A37. Kae1 likely plays a direct catalytic role in this reaction, but requires other protein(s) of the complex to fulfill this activity. This Methanopyrus kandleri (strain AV19 / DSM 6324 / JCM 9639 / NBRC 100938) protein is tRNA N6-adenosine threonylcarbamoyltransferase.